Reading from the N-terminus, the 531-residue chain is DNA damage-binding protein cmr1 (531 aa).

Disordered regions lie at residues G37–A83 and D218–H264. Positions K53–K64 are enriched in basic residues. Residues V186–S227 form a WD 1 repeat. Acidic residues predominate over residues G233–D245. WD repeat units follow at residues P253 to T293, S300 to V340, L345 to P385, L392 to E431, G454 to L497, and D500 to M531.

Belongs to the WD repeat DDB2/WDR76 family.

In terms of biological role, DNA-binding protein that binds to both single- and double-stranded DNA. Binds preferentially to UV-damaged DNA. May be involved in DNA-metabolic processes. This is DNA damage-binding protein cmr1 from Aspergillus clavatus (strain ATCC 1007 / CBS 513.65 / DSM 816 / NCTC 3887 / NRRL 1 / QM 1276 / 107).